Here is a 391-residue protein sequence, read N- to C-terminus: Histamine H4 receptor (391 aa).

Topologically, residues 1 to 19 (MSESNSTGILPPAAQVPLA) are extracellular. N-linked (GlcNAc...) asparagine glycosylation occurs at asparagine 5. A helical transmembrane segment spans residues 20 to 40 (FLMSSFAFAIMVGNAVVILAF). The Cytoplasmic segment spans residues 41 to 52 (VVDRNLRHRSNY). The chain crosses the membrane as a helical span at residues 53–73 (FFLNLAISDFLVGLISIPLYI). The Extracellular portion of the chain corresponds to 74 to 87 (PHVLFNWNFGSGIC). Cysteine 87 and cysteine 166 are oxidised to a cystine. The chain crosses the membrane as a helical span at residues 88 to 108 (MFWLITDYLLCTASVYNIVLI). Residues 109–131 (SYDRYQSVSNAVSYRAQHTGIMK) lie on the Cytoplasmic side of the membrane. Residues 132-152 (IVAQMVAVWILAFLVNGPMIL) form a helical membrane-spanning segment. Residues 153 to 174 (ASDSWKNSTNTKDCEPGFVTEW) are Extracellular-facing. N-linked (GlcNAc...) asparagine glycosylation occurs at asparagine 159. The helical transmembrane segment at 175 to 195 (YILTITMLLEFLLPVISVAYF) threads the bilayer. The Cytoplasmic portion of the chain corresponds to 196 to 306 (NVQIYWSLWK…LLRGRKLARS (111 aa)). Residues 238-258 (TSNPGLKESAASRHSESPRRK) are disordered. Basic and acidic residues predominate over residues 247 to 256 (AASRHSESPR). A helical transmembrane segment spans residues 307 to 327 (LAILLSAFAICWAPYCLFTIV). Residues 328–343 (LSTYPRTERPKSVWYS) are Extracellular-facing. Residues 344 to 364 (IAFWLQWFNSFVNPFLYPLCH) traverse the membrane as a helical segment. Residues 365–391 (RRFQKAFWKILCVTKQPALSQNQSVSS) are Cytoplasmic-facing.

This sequence belongs to the G-protein coupled receptor 1 family. In terms of assembly, interacts with TSPAN4.

It localises to the cell membrane. Functionally, the H4 subclass of histamine receptors could mediate the histamine signals in peripheral tissues. Displays a significant level of constitutive activity (spontaneous activity in the absence of agonist). The sequence is that of Histamine H4 receptor (Hrh4) from Mus musculus (Mouse).